A 130-amino-acid chain; its full sequence is Histone H2A type 1 (130 aa).

The interval 1 to 22 (MSGRGKQGGKARAKAKSRSSRA) is disordered. Ser2 is subject to N-acetylserine. Ser2 is subject to Phosphoserine; by RPS6KA5. Arg4 carries the post-translational modification Citrulline; alternate. Residue Arg4 is modified to Symmetric dimethylarginine; by PRMT5; alternate. Lys6 is modified (N6-(2-hydroxyisobutyryl)lysine). The span at 7–19 (QGGKARAKAKSRS) shows a compositional bias: basic residues. Lys10 is modified (N6-(2-hydroxyisobutyryl)lysine; alternate). Position 10 is an N6-lactoyllysine; alternate (Lys10). N6-succinyllysine; alternate is present on Lys10. Residues Lys14 and Lys16 each participate in a glycyl lysine isopeptide (Lys-Gly) (interchain with G-Cter in ubiquitin) cross-link. Position 37 is an N6-(2-hydroxyisobutyryl)lysine; alternate (Lys37). Residue Lys37 is modified to N6-(beta-hydroxybutyryl)lysine; alternate. Lys37 is subject to N6-crotonyllysine; alternate. Lys75 and Lys76 each carry N6-(2-hydroxyisobutyryl)lysine. The residue at position 96 (Lys96) is an N6-(2-hydroxyisobutyryl)lysine; alternate. Lys96 bears the N6-succinyllysine; alternate mark. The residue at position 96 (Lys96) is an N6-glutaryllysine; alternate. Lys100 carries the post-translational modification N6-glutaryllysine. Gln105 carries the post-translational modification N5-methylglutamine. An N6-(2-hydroxyisobutyryl)lysine; alternate modification is found at Lys119. 2 positions are modified to N6-crotonyllysine; alternate: Lys119 and Lys120. N6-glutaryllysine; alternate is present on residues Lys119 and Lys120. Residue Lys120 forms a Glycyl lysine isopeptide (Lys-Gly) (interchain with G-Cter in ubiquitin); alternate linkage. Thr121 carries the phosphothreonine; by DCAF1 modification. At Lys126 the chain carries N6-crotonyllysine; alternate. Lys126 bears the N6-glutaryllysine; alternate mark.

The protein belongs to the histone H2A family. The nucleosome is a histone octamer containing two molecules each of H2A, H2B, H3 and H4 assembled in one H3-H4 heterotetramer and two H2A-H2B heterodimers. The octamer wraps approximately 147 bp of DNA. Interacts with VRK1; the interaction is mediated by the nucleosome acidic patch, a cluster of negatively charged residues of H2A and H2B forming a cleft within the nucleosome core. Post-translationally, deiminated on Arg-4 in granulocytes upon calcium entry. In terms of processing, monoubiquitination of Lys-120 (H2AK119Ub) by RING1, TRIM37 and RNF2/RING2 complex gives a specific tag for epigenetic transcriptional repression and participates in X chromosome inactivation of female mammals. It is involved in the initiation of both imprinted and random X inactivation. Ubiquitinated H2A is enriched in inactive X chromosome chromatin. Ubiquitination of H2A functions downstream of methylation of 'Lys-27' of histone H3 (H3K27me). H2AK119Ub by RNF2/RING2 can also be induced by ultraviolet and may be involved in DNA repair. Following DNA double-strand breaks (DSBs), it is ubiquitinated through 'Lys-63' linkage of ubiquitin moieties by the E2 ligase UBE2N and the E3 ligases RNF8 and RNF168, leading to the recruitment of repair proteins to sites of DNA damage. Ubiquitination at Lys-14 and Lys-16 (H2AK13Ub and H2AK15Ub, respectively) in response to DNA damage is initiated by RNF168 that mediates monoubiquitination at these 2 sites, and 'Lys-63'-linked ubiquitin are then conjugated to monoubiquitin; RNF8 is able to extend 'Lys-63'-linked ubiquitin chains in vitro. H2AK119Ub and ionizing radiation-induced 'Lys-63'-linked ubiquitination (H2AK13Ub and H2AK15Ub) are distinct events. Phosphorylation on Ser-2 (H2AS1ph) is enhanced during mitosis. Phosphorylation on Ser-2 by RPS6KA5/MSK1 directly represses transcription. Acetylation of H3 inhibits Ser-2 phosphorylation by RPS6KA5/MSK1. Phosphorylation at Thr-121 (H2AT120ph) by DCAF1 is present in the regulatory region of many tumor suppresor genes and down-regulates their transcription. Post-translationally, symmetric dimethylation on Arg-4 by the PRDM1/PRMT5 complex may play a crucial role in the germ-cell lineage. In terms of processing, glutamine methylation at Gln-105 (H2AQ104me) by FBL is specifically dedicated to polymerase I. It is present at 35S ribosomal DNA locus and impairs binding of the FACT complex. Crotonylation (Kcr) is specifically present in male germ cells and marks testis-specific genes in post-meiotic cells, including X-linked genes that escape sex chromosome inactivation in haploid cells. Crotonylation marks active promoters and enhancers and confers resistance to transcriptional repressors. It is also associated with post-meiotically activated genes on autosomes. Post-translationally, lactylated in macrophages by EP300/P300 by using lactoyl-CoA directly derived from endogenous or exogenous lactate, leading to stimulates gene transcription.

The protein localises to the nucleus. The protein resides in the chromosome. In terms of biological role, core component of nucleosome. Nucleosomes wrap and compact DNA into chromatin, limiting DNA accessibility to the cellular machineries which require DNA as a template. Histones thereby play a central role in transcription regulation, DNA repair, DNA replication and chromosomal stability. DNA accessibility is regulated via a complex set of post-translational modifications of histones, also called histone code, and nucleosome remodeling. The chain is Histone H2A type 1 from Rattus norvegicus (Rat).